Here is a 542-residue protein sequence, read N- to C-terminus: Nuclear hormone receptor family member nhr-35 (542 aa).

Residues 74–149 (NSICHICSDV…SGMRDDQVQS (76 aa)) constitute a DNA-binding region (nuclear receptor). 2 consecutive NR C4-type zinc fingers follow at residues 77 to 97 (CHIC…CNGC) and 113 to 137 (CRFE…FMKC). The NR LBD domain maps to 186–438 (EYDQLLESLL…VLMEELILAE (253 aa)). The interval 445–487 (RQDQTPCSIMNDTPSGSQDMCSPCPEDLLRTSTSSNSPTNSSL) is disordered. Positions 448–464 (QTPCSIMNDTPSGSQDM) are enriched in polar residues. A compositionally biased stretch (low complexity) spans 475 to 487 (TSTSSNSPTNSSL).

The protein belongs to the nuclear hormone receptor family.

It is found in the nucleus. Functionally, orphan nuclear receptor. This is Nuclear hormone receptor family member nhr-35 (nhr-35) from Caenorhabditis elegans.